A 217-amino-acid chain; its full sequence is Adenylate kinase (217 aa).

10-15 (GAGKGT) contributes to the ATP binding site. An NMP region spans residues 30 to 59 (STGDMLRAAVKAGTEMGLAAKKVMDAGGLV). Residues T31, R36, 57 to 59 (GLV), 85 to 88 (GFPR), and Q92 contribute to the AMP site. The LID stretch occupies residues 122–159 (GRRSHPASGRTYHVKFNPPKVDGVDDVTGEPLVQRDDD). ATP contacts are provided by residues R123 and 132–133 (TY). R156 and R167 together coordinate AMP. An ATP-binding site is contributed by G203.

Belongs to the adenylate kinase family. Monomer.

Its subcellular location is the cytoplasm. The catalysed reaction is AMP + ATP = 2 ADP. It participates in purine metabolism; AMP biosynthesis via salvage pathway; AMP from ADP: step 1/1. Its function is as follows. Catalyzes the reversible transfer of the terminal phosphate group between ATP and AMP. Plays an important role in cellular energy homeostasis and in adenine nucleotide metabolism. In Leptothrix cholodnii (strain ATCC 51168 / LMG 8142 / SP-6) (Leptothrix discophora (strain SP-6)), this protein is Adenylate kinase.